The primary structure comprises 242 residues: 2-amino-5-formylamino-6-ribosylaminopyrimidin-4(3H)-one 5'-monophosphate deformylase (242 aa).

4 residues coordinate Fe cation: Glu-46, His-48, Asp-57, and His-125.

This sequence belongs to the creatininase superfamily. FAPy deformylase family. In terms of assembly, homodimer. Requires Fe(2+) as cofactor. Zn(2+) serves as cofactor.

It carries out the reaction 2-amino-5-formylamino-6-(5-phospho-D-ribosylamino)pyrimidin-4(3H)-one + H2O = 2,5-diamino-6-(1-D-ribosylamino)pyrimidin-4(3H)-one 5'-phosphate + formate + H(+). Its pathway is cofactor biosynthesis; coenzyme F420 biosynthesis. It functions in the pathway cofactor biosynthesis; riboflavin biosynthesis. Functionally, catalyzes the hydrolysis of the formamide of 2-amino-5-formylamino-6-ribosylamino-4(3H)-pyrimidinone 5'-monophosphate (FAPy) to form 2,5-diamino-6-ribosylamino-4(3H)-pyrimidinone 5'-phosphate (APy). The chain is 2-amino-5-formylamino-6-ribosylaminopyrimidin-4(3H)-one 5'-monophosphate deformylase from Methanococcus aeolicus (strain ATCC BAA-1280 / DSM 17508 / OCM 812 / Nankai-3).